A 296-amino-acid chain; its full sequence is Phosphoribosylaminoimidazole-succinocarboxamide synthase (296 aa).

The protein belongs to the SAICAR synthetase family.

The catalysed reaction is 5-amino-1-(5-phospho-D-ribosyl)imidazole-4-carboxylate + L-aspartate + ATP = (2S)-2-[5-amino-1-(5-phospho-beta-D-ribosyl)imidazole-4-carboxamido]succinate + ADP + phosphate + 2 H(+). It functions in the pathway purine metabolism; IMP biosynthesis via de novo pathway; 5-amino-1-(5-phospho-D-ribosyl)imidazole-4-carboxamide from 5-amino-1-(5-phospho-D-ribosyl)imidazole-4-carboxylate: step 1/2. The protein is Phosphoribosylaminoimidazole-succinocarboxamide synthase of Desulfotalea psychrophila (strain LSv54 / DSM 12343).